A 280-amino-acid polypeptide reads, in one-letter code: B3 domain-containing protein At5g25470 (280 aa).

The segment at residues 20-114 is a DNA-binding region (TF-B3 1); sequence WKSLSPGQNW…FLEVQIFKND (95 aa). The tract at residues 122–153 is disordered; it reads PPEVEPETEPFHPTTPKNSHKETTTASASASA. A DNA-binding region (TF-B3 2) is located at residues 183 to 276; sequence YFVKTLTKGN…ELVTAVRVHF (94 aa).

It localises to the nucleus. The protein is B3 domain-containing protein At5g25470 of Arabidopsis thaliana (Mouse-ear cress).